A 440-amino-acid polypeptide reads, in one-letter code: 2-methylisoborneol synthase (440 aa).

The segment at 1–116 (MPDSGPLGPH…SPAPAEPAAG (116 aa)) is disordered. The span at 17 to 27 (TPATTVPDAPA) shows a compositional bias: low complexity. Residues 48 to 58 (PPVPIPSPSPP) are compositionally biased toward pro residues. Residues 59-75 (SGSASAAADTPDATTVG) are compositionally biased toward low complexity. A compositionally biased stretch (pro residues) spans 102–111 (PSLPGSPAPA). Residues D197, D198, E202, N345, S349, and E353 each coordinate Mg(2+).

Belongs to the terpene synthase family. 2-methylisoborneol synthase subfamily. It depends on Mg(2+) as a cofactor.

It catalyses the reaction (E)-2-methylgeranyl diphosphate + H2O = 2-methylisoborneol + diphosphate. Its function is as follows. Catalyzes the cyclization of 2-methylgeranyl diphosphate (2-MeGPP) to 2-methylisoborneol (2-MIB), which likely involves the intermediacy of 2-methyllinalyl diphosphate. The sequence is that of 2-methylisoborneol synthase from Streptomyces ambofaciens (strain ATCC 23877 / 3486 / DSM 40053 / JCM 4204 / NBRC 12836 / NRRL B-2516).